The following is a 330-amino-acid chain: UPF0324 membrane protein BT_4609 (330 aa).

The next 10 membrane-spanning stretches (helical) occupy residues 16-33 (IYVA…LDYI), 38-60 (AWSA…LTCG), 73-95 (YLLQ…LASG), 99-116 (MEFT…GWFI), 128-150 (SYLI…GPVL), 160-182 (ALGT…GHAL), 189-211 (FGTW…AAYG), 221-240 (IKLT…SFIF), 247-269 (ISIP…LLNG), and 284-306 (TLTI…SVGV).

It belongs to the UPF0324 family.

Its subcellular location is the cell membrane. In Bacteroides thetaiotaomicron (strain ATCC 29148 / DSM 2079 / JCM 5827 / CCUG 10774 / NCTC 10582 / VPI-5482 / E50), this protein is UPF0324 membrane protein BT_4609.